A 57-amino-acid chain; its full sequence is MAVPKRKMSRSNTRHRRSQWKAAVPTLVSCERCQEPKLQHIACPSCGTYNKRQVLEV.

Belongs to the bacterial ribosomal protein bL32 family.

The chain is Large ribosomal subunit protein bL32 from Streptomyces griseus subsp. griseus (strain JCM 4626 / CBS 651.72 / NBRC 13350 / KCC S-0626 / ISP 5235).